The chain runs to 23 residues: uncharacterized protein (23 aa).

A helical membrane pass occupies residues 3-23; the sequence is YFFMGISFMVIVWAGTFALMI.

It is found in the cell inner membrane. This is an uncharacterized protein from Escherichia coli (strain K12).